Reading from the N-terminus, the 269-residue chain is Phosphate import ATP-binding protein PstB 2 (269 aa).

The 242-residue stretch at 23 to 264 (LHTEDLHVFY…PKIQATEDYV (242 aa)) folds into the ABC transporter domain. 55–62 (GPSGCGKS) serves as a coordination point for ATP.

The protein belongs to the ABC transporter superfamily. Phosphate importer (TC 3.A.1.7) family. In terms of assembly, the complex is composed of two ATP-binding proteins (PstB), two transmembrane proteins (PstC and PstA) and a solute-binding protein (PstS).

It localises to the cell membrane. It catalyses the reaction phosphate(out) + ATP + H2O = ADP + 2 phosphate(in) + H(+). Its function is as follows. Part of the ABC transporter complex PstSACB involved in phosphate import. Responsible for energy coupling to the transport system. This is Phosphate import ATP-binding protein PstB 2 from Enterococcus faecalis (strain ATCC 700802 / V583).